Consider the following 593-residue polypeptide: UvrABC system protein C (593 aa).

The GIY-YIG domain maps to 17 to 94 (MEPGCYLMKD…IKQYQPRYNI (78 aa)). In terms of domain architecture, UVR spans 199–234 (KTILKSLEERMLTASESLDFERAKEYRDLIQHIQNL).

It belongs to the UvrC family. Interacts with UvrB in an incision complex.

The protein resides in the cytoplasm. Its function is as follows. The UvrABC repair system catalyzes the recognition and processing of DNA lesions. UvrC both incises the 5' and 3' sides of the lesion. The N-terminal half is responsible for the 3' incision and the C-terminal half is responsible for the 5' incision. The sequence is that of UvrABC system protein C from Staphylococcus aureus (strain MRSA252).